Here is a 622-residue protein sequence, read N- to C-terminus: Low affinity potassium transport system protein Kup (622 aa).

A run of 12 helical transmembrane segments spans residues 9–29, 49–69, 103–123, 137–157, 165–185, 213–233, 247–267, 276–296, 337–357, 363–383, 396–416, and 419–439; these read LPAI…TSPL, VFGF…IKYL, VIMG…TPAI, PQLD…LFMI, VGKL…VLGL, VSFI…ALYA, WFTV…ALLL, PFFL…AALA, IYIP…IVSF, LAAA…ILST, LVAL…SANL, and LLSG…IMTT.

This sequence belongs to the HAK/KUP transporter (TC 2.A.72) family.

Its subcellular location is the cell inner membrane. The enzyme catalyses K(+)(in) + H(+)(in) = K(+)(out) + H(+)(out). Its function is as follows. Responsible for the low-affinity transport of potassium into the cell. Likely operates as a K(+):H(+) symporter. The sequence is that of Low affinity potassium transport system protein Kup from Salmonella arizonae (strain ATCC BAA-731 / CDC346-86 / RSK2980).